A 159-amino-acid polypeptide reads, in one-letter code: Transcriptional repressor NrdR (159 aa).

A zinc finger spans residues 3 to 34 (CPKCGYNKSSVVDSRQAEEGTTIRRRRECEKC). An ATP-cone domain is found at 49–139 (LLVIKKDGTR…VYKSFKDVDE (91 aa)).

This sequence belongs to the NrdR family. Zn(2+) is required as a cofactor.

In terms of biological role, negatively regulates transcription of bacterial ribonucleotide reductase nrd genes and operons by binding to NrdR-boxes. In Streptococcus agalactiae serotype Ia (strain ATCC 27591 / A909 / CDC SS700), this protein is Transcriptional repressor NrdR.